A 466-amino-acid polypeptide reads, in one-letter code: Prophage integrase IntF (466 aa).

The region spanning 134–239 is the Core-binding (CB) domain; the sequence is KTKVTFSVAW…LLRAFIKWSN (106 aa). Positions 268–445 constitute a Tyr recombinase domain; the sequence is KADDCLQKEQ…PLDLLRKWHE (178 aa). Active-site residues include arginine 306, lysine 328, histidine 396, arginine 399, and histidine 422. The active-site O-(3'-phospho-DNA)-tyrosine intermediate is tyrosine 432.

It belongs to the 'phage' integrase family.

Its function is as follows. Integrase is necessary for integration of the phage into the host genome by site-specific recombination. In conjunction with excisionase, integrase is also necessary for excision of the prophage from the host genome. The polypeptide is Prophage integrase IntF (intF) (Escherichia coli (strain K12)).